The chain runs to 345 residues: Twinfilin (345 aa).

ADF-H domains lie at 4–139 (QTGI…KHKR) and 177–312 (GISC…DELH). Positions 320 to 345 (PAFAKPKGPPNRGAKRLTRPSNEDQV) are disordered.

Belongs to the actin-binding proteins ADF family. Twinfilin subfamily. As to quaternary structure, interacts with G-actin; ADP-actin form.

It is found in the cytoplasm. The protein localises to the cytoskeleton. Its subcellular location is the cell cortex. In terms of biological role, actin-binding protein involved in motile and morphological processes. Inhibits actin polymerization, likely by sequestering G-actin. The protein is Twinfilin (twf) of Drosophila pseudoobscura pseudoobscura (Fruit fly).